The following is a 392-amino-acid chain: Monooxygenase AgnR1 (392 aa).

The signal sequence occupies residues 1 to 20 (MSAPQKCAAVVVGAGPAGLA). Residue asparagine 134 is glycosylated (N-linked (GlcNAc...) asparagine).

Its function is as follows. Monooxygenase; part of the gene cluster that mediates the biosynthesis of agnestins, dihydroxy-xanthone metabolites. The pathway begins with the assembly and cyclization of atrochrysone thioester by the non-reducing polyketide synthase Agnpks1. The atrochrysone carboxyl ACP thioesterase AgnL7 then breaks the thioester bond and releases the atrochrysone carboxylic acid as the first enzyme-free intermediate. The decarboxylase AgnL1 then catalyzes the concerted decarboxylation-elimination required to convert atochrysone carboxylic acid into emodin anthrone, which is further oxidized to emodin by the anthrone oxygenase AgnL2. Emodin then undergoes reduction catalyzed by the oxidoreductase AgnL4 to yield the dihydroquinone tautomer which is the substrate for reduction by the short chain dehydrogenase AgnL6 reduction to produce hydroxyketone, followed by AgnL8 dehydration and likely spontaneous autoxidation to chrysophanol. Baeyer-Villiger oxidation by the oxidase AgnL3 leads to monodictyphenone via cleavage of the C-10/C-10a bond of chrysophanol. Alternative cleavage at the C-4a/C-10 bond of chrysophanol also leads to the formation some cephalone F. Further conversion to agnestins A and B, requires reduction to dihydro-monodictyphenone, oxidation to agnestin C probably via an epoxide, and rearrangement to either agnestin A or agnestin B directly, although agnestin A or agnestin B can also interconvert. Within the cluster, AgnR1 is the only unassigned oxidoreductase present which could be involved in this conversion. However, AgnR1 seems not to be involved in this step, and thus genes involved in the proposed oxidation/reduction may be located elsewhere on the genome. Further agnestin A derivatives are probably formed by spontaneous decarboxylations, dehydrations and methanolysis reactions. In Paecilomyces divaricatus (Penicillium divaricatum), this protein is Monooxygenase AgnR1.